The chain runs to 247 residues: Adenosylcobinamide-GDP ribazoletransferase (247 aa).

6 helical membrane passes run 34–54 (IVTF…VFVA), 59–79 (CGIP…TGGF), 113–133 (GGLA…ELAL), 138–158 (MLAA…LLMY), 171–193 (VFIG…ILAA), and 194–214 (ILMP…AIFI).

It belongs to the CobS family. The cofactor is Mg(2+).

It localises to the cell inner membrane. The catalysed reaction is alpha-ribazole + adenosylcob(III)inamide-GDP = adenosylcob(III)alamin + GMP + H(+). It catalyses the reaction alpha-ribazole 5'-phosphate + adenosylcob(III)inamide-GDP = adenosylcob(III)alamin 5'-phosphate + GMP + H(+). It participates in cofactor biosynthesis; adenosylcobalamin biosynthesis; adenosylcobalamin from cob(II)yrinate a,c-diamide: step 7/7. Its function is as follows. Joins adenosylcobinamide-GDP and alpha-ribazole to generate adenosylcobalamin (Ado-cobalamin). Also synthesizes adenosylcobalamin 5'-phosphate from adenosylcobinamide-GDP and alpha-ribazole 5'-phosphate. This Citrobacter koseri (strain ATCC BAA-895 / CDC 4225-83 / SGSC4696) protein is Adenosylcobinamide-GDP ribazoletransferase.